Consider the following 267-residue polypeptide: MTLWQAFILSLIQGITEFLPISSSGHLVITRELLHWQDAGVAFDAFTGLGTLTAVLFYYRKDVCSILYHWFRQFRHCDAPPAPEAKLGNQLIVATLPALLIGFMVKDHIDALTHRPLLIASTTMIFAIFLAAADFWGRKKLSLPETNYRQAFYYGLAQTLALVPGVSRSGITLTAGLAMHFSRESAARFSFLQSIPISAAAGGYGLWKLATNPSDFSWQLIALSYVTATLAAYVCIALFIRFLNTVGMMPHVIYRLLLGAYLFFVFM.

Helical transmembrane passes span 1–21 (MTLW…FLPI), 39–59 (AGVA…LFYY), 85–105 (AKLG…GFMV), 117–137 (LLIA…DFWG), 189–209 (FSFL…LWKL), 220–240 (LIAL…ALFI), and 246–266 (VGMM…FFVF).

The protein belongs to the UppP family.

The protein resides in the cell inner membrane. The enzyme catalyses di-trans,octa-cis-undecaprenyl diphosphate + H2O = di-trans,octa-cis-undecaprenyl phosphate + phosphate + H(+). Catalyzes the dephosphorylation of undecaprenyl diphosphate (UPP). Confers resistance to bacitracin. The polypeptide is Undecaprenyl-diphosphatase (Dichelobacter nodosus (strain VCS1703A)).